Consider the following 260-residue polypeptide: Shikimate dehydrogenase (NADP(+)) (260 aa).

Shikimate contacts are provided by residues 14 to 16 and T60; that span reads SAS. The active-site Proton acceptor is K64. Residues N85 and D100 each contribute to the shikimate site. Residues 121–125, 145–150, and F201 each bind NADP(+); these read GAGGA and NRTYER. Y203 contributes to the shikimate binding site. NADP(+) is bound at residue G225.

The protein belongs to the shikimate dehydrogenase family. In terms of assembly, homodimer.

The catalysed reaction is shikimate + NADP(+) = 3-dehydroshikimate + NADPH + H(+). It participates in metabolic intermediate biosynthesis; chorismate biosynthesis; chorismate from D-erythrose 4-phosphate and phosphoenolpyruvate: step 4/7. Functionally, involved in the biosynthesis of the chorismate, which leads to the biosynthesis of aromatic amino acids. Catalyzes the reversible NADPH linked reduction of 3-dehydroshikimate (DHSA) to yield shikimate (SA). In Pyrobaculum islandicum (strain DSM 4184 / JCM 9189 / GEO3), this protein is Shikimate dehydrogenase (NADP(+)).